The chain runs to 263 residues: Small ribosomal subunit protein uS2 (263 aa).

Ser-2 carries the N-acetylserine modification. The span at 211 to 242 (EQTAEEEAEAAEGAEFEVEEEEVEQEWQEPAE) shows a compositional bias: acidic residues. Positions 211 to 263 (EQTAEEEAEAAEGAEFEVEEEEVEQEWQEPAEADWNASAPPADWNDAANAEAF) are disordered. Low complexity predominate over residues 246 to 263 (NASAPPADWNDAANAEAF).

This sequence belongs to the universal ribosomal protein uS2 family. In terms of assembly, component of the small ribosomal subunit. Mature ribosomes consist of a small (40S) and a large (60S) subunit. The 40S subunit contains about 33 different proteins and 1 molecule of RNA (18S). The 60S subunit contains about 49 different proteins and 3 molecules of RNA (25S, 5.8S and 5S). Interacts with RPS21.

The protein localises to the cytoplasm. Functionally, required for the assembly and/or stability of the 40S ribosomal subunit. Required for the processing of the 20S rRNA-precursor to mature 18S rRNA in a late step of the maturation of 40S ribosomal subunits. This is Small ribosomal subunit protein uS2 from Komagataella phaffii (strain GS115 / ATCC 20864) (Yeast).